Here is a 364-residue protein sequence, read N- to C-terminus: Probable G-protein coupled receptor AH9.4 (364 aa).

Position 1 (Met-1) is a topological domain, extracellular. The chain crosses the membrane as a helical span at residues 2–22; that stretch reads AFLQSAYLVMVFTVPIAGVIL. At 23–48 the chain is on the cytoplasmic side; that stretch reads NTYVLRKLIRVARKSVVRFETTSGLP. Residues 49 to 69 form a helical membrane-spanning segment; it reads LAAMSVGDSITLCALLMQAIF. Residues 70–89 are Extracellular-facing; that stretch reads HITPKGEVPTVVLSSICKFG. A helical membrane pass occupies residues 90 to 110; the sequence is IFLIHSTSAFSVWCWFFLSVL. The Cytoplasmic portion of the chain corresponds to 111–130; it reads RYIAVFHPFKYRTIWRQPRN. A helical transmembrane segment spans residues 131–151; that stretch reads ALKFLAGAVGMFQIYTLIFVT. Over 152-177 the chain is Extracellular; the sequence is YRQEEKSCGEYDVFHESAFKHVHLLD. Residues 178–198 traverse the membrane as a helical segment; that stretch reads IFLFYAIPSLLRITLDFLVLI. The Cytoplasmic portion of the chain corresponds to 199 to 277; the sequence is HCYSPFSVEG…KKKTAMVMRS (79 aa). A helical transmembrane segment spans residues 278–298; sequence ILISVLNLLLNLPSHIFRAWA. The Extracellular segment spans residues 299–315; that stretch reads SYDESSLENEIVRTLEP. A helical membrane pass occupies residues 316–336; sequence IAQMMYFSQFACNAFYLATSI. Over 337–364 the chain is Cytoplasmic; sequence YETNGSPRNTVISSSNRHVSRCISDDEA.

Belongs to the G-protein coupled receptor 1 family.

It is found in the cell membrane. Its function is as follows. Not known. Putative receptor. The chain is Probable G-protein coupled receptor AH9.4 from Caenorhabditis elegans.